The primary structure comprises 351 residues: Tsukushi-A (351 aa).

The N-terminal stretch at 1–17 (MALSSWIFFLLVHGIVG) is a signal peptide. LRR repeat units lie at residues 59-82 (PLDT…VLSG), 85-108 (YTTL…TFSK), 109-132 (LRYL…SFLY), 134-155 (RLTE…AFTL), 158-181 (QGRS…AERP), 182-203 (VPNI…DLHG), 204-226 (IPLR…SFLG), 252-276 (LTSL…MFFG), and 277-300 (LKAL…IMLH).

As to quaternary structure, interacts with bmp4. Interacts with dll1 (via extracellular region). Interacts with fgf8; inhibits fgf8 signaling. Interacts with nodal2/Xnr2; enhances nodal2 activity. As to expression, during embryogenesis, localized to the animal hemisphere during late blastula and gastrula stages. At stage 10, expression is also detected around the dorsal blastopore lip. Expressed in the mandibular crest segment, branchial crest segment and differentiating somites at stage 21/22. Expressed in the germ ring including the shield at shield stage and in the tailbud at the 10-somite stage. At the early neurula stage (stage 13), expression is hardly detectable in the presumptive neural plate region, and restricted to the non-neural ectoderm where its levels increase by stage 14, especially in the presumptive anterior neural fold. Also expressed in the prospective cranial neural crest. At the early tailbud stage (stage 23), expressed in cranial neural crest cells, the dorsal retina and the lens placode.

Its subcellular location is the secreted. In terms of biological role, contributes to various developmental events through its interactions with multiple signaling pathways. Dorsalizing factor which functions as an inhibitor of bone morphogenetic proteins (BMP) during gastrulation. Promotes dll1-dependent activation of Notch signaling and is required for neural crest formation. Induces endoderm and dorsal mesoderm formation by enhancing nodal2/Xnr2 activity while inhibiting ventrolateral mesoderm formation through inhibition of fgf8. The protein is Tsukushi-A of Xenopus laevis (African clawed frog).